Here is a 945-residue protein sequence, read N- to C-terminus: Glutamyl aminopeptidase (945 aa).

The Cytoplasmic portion of the chain corresponds to 1–18 (MNFAEEEPSKKYCIKGKH). The helical; Signal-anchor for type II membrane protein transmembrane segment at 19–39 (VAIICATVVAVGLIVGLSVGL) threads the bilayer. The Extracellular portion of the chain corresponds to 40-945 (TRSCEPGTTP…SISEWFTSMP (906 aa)). The segment at 45–77 (PGTTPAPSNPPPHTSTALPPQDQNVCPDSDDES) is disordered. Residues Asn-116 and Asn-189 are each glycosylated (N-linked (GlcNAc...) asparagine). Glu-215 provides a ligand contact to substrate. Residues Asn-236 and Asn-316 are each glycosylated (N-linked (GlcNAc...) asparagine). 349–353 (GAMEN) contacts substrate. His-385 contributes to the Zn(2+) binding site. Residue Glu-386 is the Proton acceptor of the active site. Positions 389 and 408 each coordinate Zn(2+). 8 N-linked (GlcNAc...) asparagine glycosylation sites follow: Asn-546, Asn-584, Asn-601, Asn-640, Asn-669, Asn-754, Asn-766, and Asn-792. Arg-878 provides a ligand contact to substrate.

Belongs to the peptidase M1 family. As to quaternary structure, homodimer; disulfide-linked. Requires Zn(2+) as cofactor. In terms of tissue distribution, highest expression in kidney proximal tubules and ileum enterocytes. High expression also detected in liver and pituitary. Lower levels in heart, adrenal gland and brain. Not detected in aorta, lung or spleen. In heart, higher levels in ventricle than in atrium. Also expressed in glomerular mesangial cells.

Its subcellular location is the cell membrane. It catalyses the reaction Release of N-terminal glutamate (and to a lesser extent aspartate) from a peptide.. Substrate specificity is modulated by calcium which enhances the enzymatic activity for cleavage of acidic residues while reducing its activity with basic residues. Inhibited by aminopeptidase inhibitors amastatin and bestatin. Functionally, regulates central hypertension through its calcium-modulated preference to cleave N-terminal acidic residues from peptides such as angiotensin II. This is Glutamyl aminopeptidase (Enpep) from Rattus norvegicus (Rat).